Reading from the N-terminus, the 366-residue chain is tRNA-specific 2-thiouridylase MnmA (366 aa).

ATP-binding positions include 6 to 13 (AMSGGVDS) and leucine 32. Cysteine 101 serves as the catalytic Nucleophile. Cysteines 101 and 199 form a disulfide. Glycine 125 contacts ATP. An interaction with tRNA region spans residues 149-151 (KDQ). The active-site Cysteine persulfide intermediate is the cysteine 199.

Belongs to the MnmA/TRMU family.

Its subcellular location is the cytoplasm. It carries out the reaction S-sulfanyl-L-cysteinyl-[protein] + uridine(34) in tRNA + AH2 + ATP = 2-thiouridine(34) in tRNA + L-cysteinyl-[protein] + A + AMP + diphosphate + H(+). Its function is as follows. Catalyzes the 2-thiolation of uridine at the wobble position (U34) of tRNA, leading to the formation of s(2)U34. The chain is tRNA-specific 2-thiouridylase MnmA from Corynebacterium diphtheriae (strain ATCC 700971 / NCTC 13129 / Biotype gravis).